A 1321-amino-acid chain; its full sequence is C-Jun-amino-terminal kinase-interacting protein 4 (1321 aa).

An N-acetylmethionine modification is found at M1. Residues 7–95 (VVYQEEPGGS…ITQYEREKAL (89 aa)) form the RH1 domain. Residues 66 to 166 (AQDQEHQVEL…NALHQRHTEM (101 aa)) are a coiled coil. 5 positions are modified to phosphoserine: S109, S183, S185, S194, and S203. A disordered region spans residues 203–308 (SLGIFPLPAG…EGFVKGTDTS (106 aa)). At T217 the chain carries Phosphothreonine. Polar residues predominate over residues 236-248 (ELSQPRSHTSLKV). Phosphoserine occurs at positions 238, 251, 265, 268, and 272. Residues 266-285 (DISQGGSKATTPASTANSDV) show a composition bias toward polar residues. Residue T292 is modified to Phosphothreonine. 4 positions are modified to phosphoserine: S311, S329, S332, and S347. A compositionally biased stretch (polar residues) spans 322 to 332 (AQETRNVSTES). The tract at residues 322 to 341 (AQETRNVSTESGENEEKSEV) is disordered. Phosphothreonine occurs at positions 348, 365, and 418. A coiled-coil region spans residues 408-534 (REVENLILEN…LQEAVRWTEM (127 aa)). Residues 473 to 489 (LRKARAEAEDARQKAKD) are compositionally biased toward basic and acidic residues. Disordered stretches follow at residues 473 to 500 (LRKA…TAQR) and 563 to 600 (SSNA…SQLP). The 105-residue stretch at 500 to 604 (RKRFTRVEMA…TLSQLPGDKS (105 aa)) folds into the RH2 domain. T586 carries the post-translational modification Phosphothreonine. S588 is modified (phosphoserine). Residue T595 is modified to Phosphothreonine. A phosphoserine mark is found at S705, S728, S730, S732, and S733. Residues 724–758 (SKQRSASQSSLDKLDQELKEQQKEFKNQEELSSQV) are a coiled coil. The interval 853-883 (TGAATSPSTNGASPVIEKPPEMETENSEVDE) is disordered. Over residues 855-864 (AATSPSTNGA) the composition is skewed to polar residues. The span at 874-883 (METENSEVDE) shows a compositional bias: acidic residues. S1188 is subject to Phosphoserine. The tract at residues 1239–1267 (PQSSSGGADLTADKAGSSAQEPSSQTPLK) is disordered. Residues 1255 to 1266 (SSAQEPSSQTPL) show a composition bias toward polar residues. At T1264 the chain carries Phosphothreonine.

Belongs to the JIP scaffold family. In terms of assembly, homodimer. The homodimer interacts with ARF6, forming a heterotetramer. Homooligomer. Interacts with MAX, MAPK8, MAPK14, MAP3K3, MYC, and MAP2K4. Interacts with KNS2. Interaction with KNS2 is important in the formation of ternary complex with MAPK8. Interacts with PIP4P1. Interacts with PIKFYVE. In terms of processing, phosphorylated by MAPK8 and MAPK14. Highly expressed in brain, kidney, liver, heart.

The protein localises to the cytoplasm. It localises to the perinuclear region. Its subcellular location is the lysosome membrane. Functionally, the JNK-interacting protein (JIP) group of scaffold proteins selectively mediates JNK signaling by aggregating specific components of the MAPK cascade to form a functional JNK signaling module. Regulates lysosomal positioning by acting as an adapter protein which links PIP4P1-positive lysosomes to the dynein-dynactin complex. Assists PIKFYVE selective functionality in microtubule-based endosome-to-TGN trafficking. This is C-Jun-amino-terminal kinase-interacting protein 4 from Mus musculus (Mouse).